A 232-amino-acid polypeptide reads, in one-letter code: Lipid A 1-phosphatase (232 aa).

Transmembrane regions (helical) follow at residues 10-30 (LFITINAVALSMLLFDAPVGA), 42-62 (ELLTGFGDSAWLICISILLFF), 80-100 (ALYVSWIGAYLFTTVVFSGLL), 136-156 (FPSGHSTTVGAFFAAFALLFP), 160-180 (VAFIACAIWLGMTRVMVGAHY), and 183-203 (DVIAGLAFGGWFSLLTAIVYA).

The protein belongs to the lipid A LpxE 1-phosphatase family.

It is found in the cell inner membrane. It participates in bacterial outer membrane biogenesis; LPS lipid A biosynthesis. Functionally, probably removes the 1-phosphate moiety from lipid A species. Does not seem to act on other membrane components, nor does it dephosphorylate the 4'-phosphate group of lipid A and/or lipid A precursors. The polypeptide is Lipid A 1-phosphatase (Rhizobium etli (strain ATCC 51251 / DSM 11541 / JCM 21823 / NBRC 15573 / CFN 42)).